A 616-amino-acid polypeptide reads, in one-letter code: FAD-linked oxidoreductase cheF (616 aa).

An FAD-binding PCMH-type domain is found at 160-344; sequence NQGLVSPWYV…LSMTVRVEPA (185 aa).

This sequence belongs to the oxygen-dependent FAD-linked oxidoreductase family. It depends on FAD as a cofactor.

It participates in secondary metabolite biosynthesis. Its function is as follows. FAD-linked oxidoreductase; part of the gene cluster that mediates the biosynthesis of chaetoglobosin A which has a unique inhibitory activity against actin polymerization in mammalian cells. Chaetoglobosin A and its intermediates are involved in the morphological differentiation of C.globosum. The first step of the pathway is the synthesis of prochaetoglobosin I via condensation of one acetyl-CoA, 8 malonyl-CoA, and a L-tryptophan molecule by the PKS-NRPS hybrid synthetase cheA, followed by reduction of backbone double bond to install desired geometry by the enoyl reductase cheB. Further multiple oxidation steps performed by the cytochrome P450 monooxygenases cheE and cheG, as well as by the FAD-linked oxidoreductase cheF, lead to the formation of chaetoglobosin A. Depending on the order of action of these reductases, distinct intermediates can be identified. Within the pathway, the cytochrome P450 monooxygenase cheE catalyzes a stereospecific epoxidation on prochaetoglobosin I, cytoglobosin D, and chaetoglobosin J intermediates. The FAD-linked oxidoreductase cheF performs dehydrogenation of the C-20 hydroxyl groups in the 20-dihyrochaetoglobosin A and cytoglobosin D intermediates. Finally, the cytochrome P450 monooxygenase cheG can catalyze the stereospecific dihydroxylation of prochaetoglobosin I and prochaetoglobosin IV at C-19 and C-20, respectively. The Diels-Alderase cheD may play a role in the post-PKS-NRPS biosynthetic steps catalyzing Diels-Alder cyclization. The polypeptide is FAD-linked oxidoreductase cheF (Chaetomium globosum (strain ATCC 6205 / CBS 148.51 / DSM 1962 / NBRC 6347 / NRRL 1970) (Soil fungus)).